Consider the following 317-residue polypeptide: tRNA-cytidine(32) 2-sulfurtransferase (317 aa).

A PP-loop motif motif is present at residues 63-68 (SGGKDS). 3 residues coordinate [4Fe-4S] cluster: C138, C141, and C229.

Belongs to the TtcA family. As to quaternary structure, homodimer. Mg(2+) serves as cofactor. The cofactor is [4Fe-4S] cluster.

Its subcellular location is the cytoplasm. It carries out the reaction cytidine(32) in tRNA + S-sulfanyl-L-cysteinyl-[cysteine desulfurase] + AH2 + ATP = 2-thiocytidine(32) in tRNA + L-cysteinyl-[cysteine desulfurase] + A + AMP + diphosphate + H(+). The protein operates within tRNA modification. Catalyzes the ATP-dependent 2-thiolation of cytidine in position 32 of tRNA, to form 2-thiocytidine (s(2)C32). The sulfur atoms are provided by the cysteine/cysteine desulfurase (IscS) system. The sequence is that of tRNA-cytidine(32) 2-sulfurtransferase from Janthinobacterium sp. (strain Marseille) (Minibacterium massiliensis).